A 134-amino-acid polypeptide reads, in one-letter code: Small ribosomal subunit protein uS9c (134 aa).

This sequence belongs to the universal ribosomal protein uS9 family.

It is found in the plastid. The protein resides in the chloroplast. The polypeptide is Small ribosomal subunit protein uS9c (rps9) (Guillardia theta (Cryptophyte)).